A 395-amino-acid chain; its full sequence is Protein PELOTA 2 (395 aa).

It belongs to the eukaryotic release factor 1 family. Pelota subfamily. The cofactor is a divalent metal cation.

It localises to the cytoplasm. The protein resides in the nucleus. Component of the Pelota-HBS1L complex, a complex that recognizes stalled ribosomes and triggers the No-Go Decay (NGD) pathway. In the Pelota-HBS1L complex, pelo recognizes ribosomes stalled at the 3' end of an mRNA and engages stalled ribosomes by destabilizing mRNA in the mRNA channel. Following ribosome-binding, the Pelota-HBS1L complex promotes the disassembly of stalled ribosomes, followed by degradation of damaged mRNAs as part of the NGD pathway. This Arabidopsis thaliana (Mouse-ear cress) protein is Protein PELOTA 2 (PEL2).